We begin with the raw amino-acid sequence, 97 residues long: Antitoxin YafN (97 aa).

Belongs to the phD/YefM antitoxin family. As to quaternary structure, probably forms a complex with the mRNA interferase YafO which inhibits the mRNA interferase activity.

Functionally, antitoxin component of a type II toxin-antitoxin (TA) system. Functions as an mRNA interferase antitoxin; overexpression prevents YafO-mediated cessation of cell growth and inhibition of cell proliferation. The chain is Antitoxin YafN (yafN) from Escherichia coli (strain K12).